The chain runs to 254 residues: 5-oxoprolinase subunit A (254 aa).

This sequence belongs to the LamB/PxpA family. In terms of assembly, forms a complex composed of PxpA, PxpB and PxpC.

The enzyme catalyses 5-oxo-L-proline + ATP + 2 H2O = L-glutamate + ADP + phosphate + H(+). Catalyzes the cleavage of 5-oxoproline to form L-glutamate coupled to the hydrolysis of ATP to ADP and inorganic phosphate. The chain is 5-oxoprolinase subunit A from Burkholderia ambifaria (strain MC40-6).